Reading from the N-terminus, the 266-residue chain is MPPRAKKSLGQNFLKDRNIAARIAAQLHIGPDDWVIEIGPGPGALTRHIHAAGPARLFLLEKDHHWAREHRLHPLAGTPEAQVVLTDALLFPWERLDAAHPWKVIGNLPYNVASPLMWDICSRAPGLLRASFMIQKEVGERIVAAPGSRQYGALSVWLQCFTKPEWCFVVPPHVFTPRPKVDSAVLAFTPRTDRPDAVQSKRLARVLRLCFQQRRKQLQGILRPHVGGDASALLAGLGIDPAARPETLSPERFIALGEAVAMSAIA.

6 residues coordinate S-adenosyl-L-methionine: Asn-12, Leu-14, Gly-39, Glu-61, Asp-87, and Asn-107.

This sequence belongs to the class I-like SAM-binding methyltransferase superfamily. rRNA adenine N(6)-methyltransferase family. RsmA subfamily.

The protein resides in the cytoplasm. It catalyses the reaction adenosine(1518)/adenosine(1519) in 16S rRNA + 4 S-adenosyl-L-methionine = N(6)-dimethyladenosine(1518)/N(6)-dimethyladenosine(1519) in 16S rRNA + 4 S-adenosyl-L-homocysteine + 4 H(+). Specifically dimethylates two adjacent adenosines (A1518 and A1519) in the loop of a conserved hairpin near the 3'-end of 16S rRNA in the 30S particle. May play a critical role in biogenesis of 30S subunits. This Nitratidesulfovibrio vulgaris (strain ATCC 29579 / DSM 644 / CCUG 34227 / NCIMB 8303 / VKM B-1760 / Hildenborough) (Desulfovibrio vulgaris) protein is Ribosomal RNA small subunit methyltransferase A.